Here is a 687-residue protein sequence, read N- to C-terminus: Probable WRKY transcription factor 2 (687 aa).

Positions 197-276 are disordered; sequence YGNYNNRSSS…AGGAPAEDGY (80 aa). 2 stretches are compositionally biased toward polar residues: residues 199-208 and 219-249; these read NYNNRSSSHQ and NIES…TSLE. Residues 267–331 constitute a DNA-binding region (WRKY 1); it reads AGGAPAEDGY…YKGAHNHLKP (65 aa). Zn(2+) contacts are provided by Cys-298, Cys-303, His-326, and His-328. Disordered stretches follow at residues 324 to 384 and 416 to 453; these read GAHN…STRF and FSND…ESKR. The segment covering 354–379 has biased composition (polar residues); it reads RDSAATWVSCNNTQQQGGSNENNVEE. The span at 435 to 444 shows a compositional bias: gly residues; that stretch reads YDGGGGGGGG. The segment at residues 481–546 is a DNA-binding region (WRKY 2); it reads SDVDILDDGY…YEGKHNHDVP (66 aa). Zn(2+) contacts are provided by Cys-512, Cys-517, His-541, and His-543. The segment at 537 to 599 is disordered; it reads YEGKHNHDVP…QVTTNNQSPF (63 aa). Residues 553-565 show a composition bias toward gly residues; it reads HGGGGDSGNGNSG. The span at 578-589 shows a compositional bias: basic and acidic residues; it reads HHSEPPRGRFDR. Residues 590 to 599 are compositionally biased toward polar residues; the sequence is QVTTNNQSPF.

It belongs to the WRKY group I family. Low expression in senescent leaves. Expressed in both the unfertilized egg cell and the pollen tube.

Its subcellular location is the nucleus. Transcription factor. Regulates WOX8 and WOX9 expression and basal cell division patterns during early embryogenesis. Interacts specifically with the W box (5'-(T)TGAC[CT]-3'), a frequently occurring elicitor-responsive cis-acting element. Required to repolarize the zygote from a transient symmetric state. This chain is Probable WRKY transcription factor 2, found in Arabidopsis thaliana (Mouse-ear cress).